The chain runs to 73 residues: Ocellatin-PT8 (73 aa).

An N-terminal signal peptide occupies residues methionine 1–cysteine 22. A propeptide spanning residues aspartate 23–glutamate 39 is cleaved from the precursor.

Expressed by the skin glands.

The protein localises to the secreted. In terms of biological role, has antibacterial activity against Gram-negative bacteria E.coli ATCC 25922 (MIC=60 uM), K.pneumoniae ATCC 700603 (MIC=240 uM) and S.choleraesuis ATCC 14028 (MIC=240 uM) and against Gram-positive bacterium S.aureus ATCC 29313 (MIC=240 uM). Shows no hemolytic activity and no cytotoxicity. In Leptodactylus pustulatus (Ceara white-lipped frog), this protein is Ocellatin-PT8.